The primary structure comprises 266 residues: Undecaprenyl-diphosphatase (266 aa).

8 helical membrane passes run 1–21 (MTLFEIIILAIIQGVTEFLPI), 39–59 (QGLAFDVAVHVGSLLAVMIYF), 87–107 (WYVIVGTIPAVIIGFLMKGWI), 113–133 (TALVIAGTTIIFGLLLWYADA), 143–163 (GLTLKQAIYIGLAQVLALIPG), 187–207 (FSFLLSIPVILGAGLLATLDL), 218–238 (ALLYGAAFSFVSAYLCIYLFL), and 244–264 (IGMLPFVIYRLALGAVLLWFV).

This sequence belongs to the UppP family.

Its subcellular location is the cell inner membrane. The enzyme catalyses di-trans,octa-cis-undecaprenyl diphosphate + H2O = di-trans,octa-cis-undecaprenyl phosphate + phosphate + H(+). Functionally, catalyzes the dephosphorylation of undecaprenyl diphosphate (UPP). Confers resistance to bacitracin. In Alteromonas mediterranea (strain DSM 17117 / CIP 110805 / LMG 28347 / Deep ecotype), this protein is Undecaprenyl-diphosphatase.